An 89-amino-acid polypeptide reads, in one-letter code: Small ribosomal subunit protein uS15 (89 aa).

Belongs to the universal ribosomal protein uS15 family. Part of the 30S ribosomal subunit. Forms a bridge to the 50S subunit in the 70S ribosome, contacting the 23S rRNA.

In terms of biological role, one of the primary rRNA binding proteins, it binds directly to 16S rRNA where it helps nucleate assembly of the platform of the 30S subunit by binding and bridging several RNA helices of the 16S rRNA. Functionally, forms an intersubunit bridge (bridge B4) with the 23S rRNA of the 50S subunit in the ribosome. This Pseudomonas putida (strain ATCC 700007 / DSM 6899 / JCM 31910 / BCRC 17059 / LMG 24140 / F1) protein is Small ribosomal subunit protein uS15.